The sequence spans 96 residues: Pore-forming peptide amoebapore B (96 aa).

Positions 1 to 19 are cleaved as a signal peptide; the sequence is MRAIIFVLIFAIAFAATRE. In terms of domain architecture, Saposin B-type spans 20–96; the sequence is GAILCNLCKD…VVVCEKIHAC (77 aa). Disulfide bonds link Cys-24–Cys-96, Cys-27–Cys-90, and Cys-54–Cys-65.

Monomer. Homodimer. Hexamer; formed during insertion in the membrane.

Its subcellular location is the cytoplasmic granule. In terms of biological role, forms pores in the cell membrane of host cells. Has antibacterial activity against M.luteus, no activity against E.coli. Implicated in the cytolytic activity of the parasite. The sequence is that of Pore-forming peptide amoebapore B from Entamoeba histolytica (strain ATCC 30459 / HM-1:IMSS / ABRM).